The chain runs to 536 residues: G-protein coupled receptor Mth2 (536 aa).

Intrachain disulfides connect Cys-17-Cys-71, Cys-73-Cys-78, Cys-82-Cys-177, Cys-83-Cys-96, and Cys-138-Cys-197. Asn-24 and Asn-33 each carry an N-linked (GlcNAc...) asparagine glycan. N-linked (GlcNAc...) asparagine glycans are attached at residues Asn-103, Asn-113, Asn-118, Asn-159, and Asn-184. A helical transmembrane segment spans residues 212–232 (YAMMFSIPFMMLTIAVYLLIP). At 233-241 (ELRNQHGKS) the chain is on the cytoplasmic side. A helical membrane pass occupies residues 242–262 (LVCYLIGLTVGYSSLCYVQLY). Residues 263 to 273 (QVDATGVTCKV) lie on the Extracellular side of the membrane. The helical transmembrane segment at 274–294 (FGYTAYFFFMGAYMWLSVISF) threads the bilayer. Topologically, residues 295–314 (DLWHNFRGTRGINRFQEKKR) are cytoplasmic. Residues 315 to 335 (FLFYSLYSWGIALVFLAFTYC) form a helical membrane-spanning segment. Topologically, residues 336-365 (AQQLSNLPDNLKPGIGDGVYCWLDMSNWAA) are extracellular. Residues 366-386 (MIYFYGPILAIVVANTIMFIM) traverse the membrane as a helical segment. Topologically, residues 387–417 (TAIKIHGVQREMARIIASENSTKNLRTEKDK) are cytoplasmic. The helical transmembrane segment at 418 to 438 (FGLFLRLFLIMGITWLTELIS) threads the bilayer. The Extracellular portion of the chain corresponds to 439 to 449 (YFVGSDKGWSK). The chain crosses the membrane as a helical span at residues 450 to 470 (LFYISDLANAMQGFLIFMLFV). The Cytoplasmic segment spans residues 471-536 (MKKKVKHLIT…VDPQKTTIFR (66 aa)). Residues 487–506 (RDGSNQRQSQYSTKTTSSSV) are disordered. The span at 492-505 (QRQSQYSTKTTSSS) shows a compositional bias: low complexity.

It belongs to the G-protein coupled receptor 2 family. Mth subfamily. Homodimer.

The protein localises to the cell membrane. Its function is as follows. Involved in biological aging and stress response. Essential for adult survival. This chain is G-protein coupled receptor Mth2 (mth2), found in Drosophila simulans (Fruit fly).